A 377-amino-acid chain; its full sequence is Carboxynorspermidine/carboxyspermidine decarboxylase (377 aa).

Lys41 bears the N6-(pyridoxal phosphate)lysine mark. Glu238 and Asp274 together coordinate substrate.

The protein belongs to the Orn/Lys/Arg decarboxylase class-II family. NspC subfamily. In terms of assembly, homodimer. Pyridoxal 5'-phosphate serves as cofactor.

It localises to the cytoplasm. It catalyses the reaction carboxynorspermidine + H(+) = norspermidine + CO2. The catalysed reaction is carboxyspermidine + H(+) = spermidine + CO2. With respect to regulation, dithiothreitol greatly stimulates activity, maximum stimulation being at 5-20 mM dithiothreitol concentration. Fe(3+), Fe(2+) and Mn(2+) severely inhibit activity (88%, 82% and 50%, respectively), whereas Zn(2+) has a slightly inhibitory effect (23%) and Mg(2+), Ca(2+), Cu(2+) and Cu(+) have no effect. Functionally, catalyzes the decarboxylation of carboxynorspermidine and carboxyspermidine. 2,3-diaminopropionic acid, 2,4-diaminobutyric acid, L-ornithine or L-lysine cannot serve as substrates. The chain is Carboxynorspermidine/carboxyspermidine decarboxylase from Vibrio alginolyticus.